The primary structure comprises 348 residues: Eukaryotic translation initiation factor 3 subunit H (348 aa).

The disordered stretch occupies residues M1–A25. The span at G9–K19 shows a compositional bias: gly residues. Residues V35–L169 form the MPN domain. Residues Q266–Q285 show a composition bias toward low complexity. The disordered stretch occupies residues Q266 to P304.

It belongs to the eIF-3 subunit H family. In terms of assembly, component of the eukaryotic translation initiation factor 3 (eIF-3) complex, which is composed of 13 subunits: EIF3A, EIF3B, EIF3C, EIF3D, EIF3E, EIF3F, EIF3G, EIF3H, EIF3I, EIF3J, EIF3K, EIF3L and EIF3M.

The protein localises to the cytoplasm. Its function is as follows. Component of the eukaryotic translation initiation factor 3 (eIF-3) complex, which is involved in protein synthesis of a specialized repertoire of mRNAs and, together with other initiation factors, stimulates binding of mRNA and methionyl-tRNAi to the 40S ribosome. The eIF-3 complex specifically targets and initiates translation of a subset of mRNAs involved in cell proliferation. The chain is Eukaryotic translation initiation factor 3 subunit H from Gallus gallus (Chicken).